A 249-amino-acid polypeptide reads, in one-letter code: Diaminopimelate epimerase (249 aa).

2 residues coordinate substrate: N11 and N60. The active-site Proton donor is C69. Substrate is bound by residues 70–71 (GN), N164, and 182–183 (ER). C192 serves as the catalytic Proton acceptor. Residue 193-194 (GT) participates in substrate binding.

This sequence belongs to the diaminopimelate epimerase family. As to quaternary structure, homodimer.

The protein resides in the cytoplasm. The catalysed reaction is (2S,6S)-2,6-diaminopimelate = meso-2,6-diaminopimelate. It functions in the pathway amino-acid biosynthesis; L-lysine biosynthesis via DAP pathway; DL-2,6-diaminopimelate from LL-2,6-diaminopimelate: step 1/1. Catalyzes the stereoinversion of LL-2,6-diaminopimelate (L,L-DAP) to meso-diaminopimelate (meso-DAP), a precursor of L-lysine and an essential component of the bacterial peptidoglycan. The chain is Diaminopimelate epimerase from Campylobacter jejuni (strain RM1221).